A 61-amino-acid chain; its full sequence is Small ribosomal subunit protein uS14B (61 aa).

Cys-24, Cys-27, Cys-40, and Cys-43 together coordinate Zn(2+).

This sequence belongs to the universal ribosomal protein uS14 family. Zinc-binding uS14 subfamily. Part of the 30S ribosomal subunit. Contacts proteins S3 and S10. The cofactor is Zn(2+).

Functionally, binds 16S rRNA, required for the assembly of 30S particles and may also be responsible for determining the conformation of the 16S rRNA at the A site. The sequence is that of Small ribosomal subunit protein uS14B from Mycolicibacterium gilvum (strain PYR-GCK) (Mycobacterium gilvum (strain PYR-GCK)).